Here is a 552-residue protein sequence, read N- to C-terminus: Arginine--tRNA ligase (552 aa).

A 'HIGH' region motif is present at residues 123–133 (ANPTGPLTIGR).

It belongs to the class-I aminoacyl-tRNA synthetase family. Monomer.

It localises to the cytoplasm. The catalysed reaction is tRNA(Arg) + L-arginine + ATP = L-arginyl-tRNA(Arg) + AMP + diphosphate. The sequence is that of Arginine--tRNA ligase from Chlorobium luteolum (strain DSM 273 / BCRC 81028 / 2530) (Pelodictyon luteolum).